Here is a 381-residue protein sequence, read N- to C-terminus: uncharacterized protein (381 aa).

Belongs to the glycerate kinase type-1 family.

This is an uncharacterized protein from Mycobacterium tuberculosis (strain CDC 1551 / Oshkosh).